Here is a 376-residue protein sequence, read N- to C-terminus: MTEQKKINLLDLNREGMRELFASFGEKPFRSDQVMKWIYHFGVDNFDDMSNVNKKLKEKLKAECEIVAPEISVRQQAKDGTIKYALVLEGGQEVEAVWIPEKERATLCVSSQVGCALECTFCSTAQQGFNRNLKVSEIIGQVWRVAKDIGLDGHSEKRPVTNVVMMGMGEPLLNVKNVVPAMELMLDDWGFGLSKRRVTLSTSGVVPALDLLKEKIDVALAISLHAPDNALRDILVPVNKKYPIEEFLAACRRYIDGSKANKDVTVEYVMLNGINDSTDQAHALVQTLKGTPCKVNLIPFNPFPGNEYTRSSNSRIDRFSKVLQAAGITCIVRRPRGDDIDAACGQLAGDVVDRTKRLAKKKMRDDNAIAVNIHQA.

E95 (proton acceptor) is an active-site residue. A Radical SAM core domain is found at 101–339; sequence EKERATLCVS…CIVRRPRGDD (239 aa). A disulfide bridge connects residues C108 and C344. [4Fe-4S] cluster-binding residues include C115, C119, and C122. S-adenosyl-L-methionine contacts are provided by residues 169–170, S201, 223–225, and N301; these read GE and SLH. Residue C344 is the S-methylcysteine intermediate of the active site.

The protein belongs to the radical SAM superfamily. RlmN family. The cofactor is [4Fe-4S] cluster.

The protein resides in the cytoplasm. The catalysed reaction is adenosine(2503) in 23S rRNA + 2 reduced [2Fe-2S]-[ferredoxin] + 2 S-adenosyl-L-methionine = 2-methyladenosine(2503) in 23S rRNA + 5'-deoxyadenosine + L-methionine + 2 oxidized [2Fe-2S]-[ferredoxin] + S-adenosyl-L-homocysteine. It carries out the reaction adenosine(37) in tRNA + 2 reduced [2Fe-2S]-[ferredoxin] + 2 S-adenosyl-L-methionine = 2-methyladenosine(37) in tRNA + 5'-deoxyadenosine + L-methionine + 2 oxidized [2Fe-2S]-[ferredoxin] + S-adenosyl-L-homocysteine. Its function is as follows. Specifically methylates position 2 of adenine 2503 in 23S rRNA and position 2 of adenine 37 in tRNAs. m2A2503 modification seems to play a crucial role in the proofreading step occurring at the peptidyl transferase center and thus would serve to optimize ribosomal fidelity. This chain is Dual-specificity RNA methyltransferase RlmN, found in Pseudoalteromonas translucida (strain TAC 125).